A 467-amino-acid chain; its full sequence is tRNA-2-methylthio-N(6)-dimethylallyladenosine synthase (467 aa).

The disordered stretch occupies residues 1–20; the sequence is MSDDTTQIEPAMAQETSPRA. The region spanning 23 to 143 is the MTTase N-terminal domain; sequence RKVFVKTYGC…LPNALARVRG (121 aa). [4Fe-4S] cluster is bound by residues Cys-32, Cys-68, Cys-106, Cys-184, Cys-188, and Cys-191. In terms of domain architecture, Radical SAM core spans 170 to 402; the sequence is RKRGVSAFLT…QALLSAQQYA (233 aa). The TRAM domain occupies 405 to 467; it reads DSMIGRKMDV…TNSLIAQKLA (63 aa).

This sequence belongs to the methylthiotransferase family. MiaB subfamily. As to quaternary structure, monomer. [4Fe-4S] cluster serves as cofactor.

The protein localises to the cytoplasm. The enzyme catalyses N(6)-dimethylallyladenosine(37) in tRNA + (sulfur carrier)-SH + AH2 + 2 S-adenosyl-L-methionine = 2-methylsulfanyl-N(6)-dimethylallyladenosine(37) in tRNA + (sulfur carrier)-H + 5'-deoxyadenosine + L-methionine + A + S-adenosyl-L-homocysteine + 2 H(+). In terms of biological role, catalyzes the methylthiolation of N6-(dimethylallyl)adenosine (i(6)A), leading to the formation of 2-methylthio-N6-(dimethylallyl)adenosine (ms(2)i(6)A) at position 37 in tRNAs that read codons beginning with uridine. This chain is tRNA-2-methylthio-N(6)-dimethylallyladenosine synthase, found in Brucella melitensis biotype 1 (strain ATCC 23456 / CCUG 17765 / NCTC 10094 / 16M).